Here is a 782-residue protein sequence, read N- to C-terminus: Polyribonucleotide nucleotidyltransferase (782 aa).

Residues D514 and D520 each contribute to the Mg(2+) site. The KH domain maps to 580 to 639 (PRIITIKIPVDQIGAVIGPKGKIINQIQDDTGAEITIEDDGTIYIGATEGTAAEAARAAI). One can recognise an S1 motif domain in the interval 651-723 (GERYLGTVVK…ARGKLSLVPV (73 aa)). Over residues 734–753 (AGAGESAASGGAPRSAGGPQ) the composition is skewed to low complexity. Residues 734-782 (AGAGESAASGGAPRSAGGPQPREHQGPGRPRGRGGDHGGEGRQRTRRRH) are disordered. Residues 766–776 (RGGDHGGEGRQ) are compositionally biased toward basic and acidic residues.

This sequence belongs to the polyribonucleotide nucleotidyltransferase family. Mg(2+) serves as cofactor.

The protein resides in the cytoplasm. It catalyses the reaction RNA(n+1) + phosphate = RNA(n) + a ribonucleoside 5'-diphosphate. In terms of biological role, involved in mRNA degradation. Catalyzes the phosphorolysis of single-stranded polyribonucleotides processively in the 3'- to 5'-direction. This Acidothermus cellulolyticus (strain ATCC 43068 / DSM 8971 / 11B) protein is Polyribonucleotide nucleotidyltransferase.